We begin with the raw amino-acid sequence, 367 residues long: Zinc finger CCCH domain-containing protein 56 (367 aa).

Residues 38–80 (YNSQWNADGGGGGSSRAGSEQPPPGKKSRGGGGGEGGGNTSKS) form a disordered region. Gly residues predominate over residues 67–76 (GGGGGEGGGN). 3 C3H1-type zinc fingers span residues 87–114 (FFKTKLCCKFRAGTCPYVTNCNFAHGME), 169–197 (AYKGRHCKKFYTDEGCPYGDACTFLHDEQ), and 245–273 (NWKTRICNKWEMTGYCPFGSKCHFAHGAA).

The protein is Zinc finger CCCH domain-containing protein 56 of Oryza sativa subsp. japonica (Rice).